Reading from the N-terminus, the 210-residue chain is Ribosomal RNA large subunit methyltransferase E (210 aa).

Residues glycine 67, tryptophan 69, aspartate 87, aspartate 103, and aspartate 128 each contribute to the S-adenosyl-L-methionine site. Lysine 168 (proton acceptor) is an active-site residue.

The protein belongs to the class I-like SAM-binding methyltransferase superfamily. RNA methyltransferase RlmE family.

The protein resides in the cytoplasm. It catalyses the reaction uridine(2552) in 23S rRNA + S-adenosyl-L-methionine = 2'-O-methyluridine(2552) in 23S rRNA + S-adenosyl-L-homocysteine + H(+). Specifically methylates the uridine in position 2552 of 23S rRNA at the 2'-O position of the ribose in the fully assembled 50S ribosomal subunit. This chain is Ribosomal RNA large subunit methyltransferase E, found in Psychrobacter arcticus (strain DSM 17307 / VKM B-2377 / 273-4).